The chain runs to 110 residues: MLEKTTRMNYLYDFYQSLLTPKQRNYMSLYYLDDYSLGEIAEEYEVSRQAVYDNIKRTEAMLEDYEQKLLLFQKFQQRHKLLHRLKTHIAERYPNDEELMKLVLELEKLE.

Belongs to the UPF0122 family.

Functionally, might take part in the signal recognition particle (SRP) pathway. This is inferred from the conservation of its genetic proximity to ftsY/ffh. May be a regulatory protein. The chain is UPF0122 protein Aflv_1766 from Anoxybacillus flavithermus (strain DSM 21510 / WK1).